The primary structure comprises 220 residues: 7-cyano-7-deazaguanine synthase 1 (220 aa).

10–20 (FSGGIDSTVLL) is a binding site for ATP. Zn(2+) is bound by residues cysteine 183, cysteine 191, cysteine 194, and cysteine 197.

This sequence belongs to the QueC family. Homodimer. The cofactor is Zn(2+).

The enzyme catalyses 7-carboxy-7-deazaguanine + NH4(+) + ATP = 7-cyano-7-deazaguanine + ADP + phosphate + H2O + H(+). Its pathway is purine metabolism; 7-cyano-7-deazaguanine biosynthesis. Functionally, catalyzes the ATP-dependent conversion of 7-carboxy-7-deazaguanine (CDG) to 7-cyano-7-deazaguanine (preQ(0)). The sequence is that of 7-cyano-7-deazaguanine synthase 1 from Desulfitobacterium hafniense (strain Y51).